The chain runs to 124 residues: MPTIQQLVRKGRQAKTTKTKTPALKGSPQRRGVCTRVYTTTPKKPNSALRKVARVKLSSQIEVTAYIPGVGHNLQEHSIVLVRGGRVKDLPGVRYKIVRGSLDTQGVRNRKQARSRYGAKKEKS.

A disordered region spans residues Met-1 to Gly-32. Positions Arg-9–Lys-18 are enriched in basic residues. Asp-89 is subject to 3-methylthioaspartic acid. The disordered stretch occupies residues Gln-105–Ser-124. The segment covering Arg-108 to Gly-118 has biased composition (basic residues).

This sequence belongs to the universal ribosomal protein uS12 family. In terms of assembly, part of the 30S ribosomal subunit. Contacts proteins S8 and S17. May interact with IF1 in the 30S initiation complex.

With S4 and S5 plays an important role in translational accuracy. Its function is as follows. Interacts with and stabilizes bases of the 16S rRNA that are involved in tRNA selection in the A site and with the mRNA backbone. Located at the interface of the 30S and 50S subunits, it traverses the body of the 30S subunit contacting proteins on the other side and probably holding the rRNA structure together. The combined cluster of proteins S8, S12 and S17 appears to hold together the shoulder and platform of the 30S subunit. The sequence is that of Small ribosomal subunit protein uS12 from Salinispora arenicola (strain CNS-205).